Consider the following 267-residue polypeptide: RWD domain-containing protein 3 (267 aa).

The 108-residue stretch at 7 to 114 folds into the RWD domain; sequence QELSALAAIF…LWIQQNLRLV (108 aa). 2 interaction with UBE2I/UBC9 regions span residues 13-15 and 100-102; these read AAI and VHE.

In terms of assembly, interacts with UBE2I/UBC9, NFKBIA, HIF1A and NCOA2.

It is found in the nucleus. The protein resides in the cytoplasm. Functionally, enhancer of SUMO conjugation. Via its interaction with UBE2I/UBC9, increases SUMO conjugation to proteins by promoting the binding of E1 and E2 enzymes, thioester linkage between SUMO and UBE2I/UBC9 and transfer of SUMO to specific target proteins which include HIF1A, PIAS, NFKBIA, NR3C1 and TOP1. Positively regulates the NF-kappa-B signaling pathway by enhancing the sumoylation of NF-kappa-B inhibitor alpha (NFKBIA), promoting its stabilization which consequently leads to an increased inhibition of NF-kappa-B transcriptional activity. Negatively regulates the hypoxia-inducible factor-1 alpha (HIF1A) signaling pathway by increasing the sumoylation of HIF1A, promoting its stabilization, transcriptional activity and the expression of its target gene VEGFA during hypoxia. Has no effect on ubiquitination. This chain is RWD domain-containing protein 3 (Rwdd3), found in Mus musculus (Mouse).